Consider the following 217-residue polypeptide: Phosphoenolpyruvate guanylyltransferase (217 aa).

The phosphoenolpyruvate site is built by T150, G165, and S168.

This sequence belongs to the CofC family.

The enzyme catalyses phosphoenolpyruvate + GTP + H(+) = enolpyruvoyl-2-diphospho-5'-guanosine + diphosphate. Its pathway is cofactor biosynthesis; coenzyme F420 biosynthesis. Guanylyltransferase that catalyzes the activation of phosphoenolpyruvate (PEP) as enolpyruvoyl-2-diphospho-5'-guanosine, via the condensation of PEP with GTP. It is involved in the biosynthesis of coenzyme F420, a hydride carrier cofactor. This chain is Phosphoenolpyruvate guanylyltransferase, found in Mycobacterium marinum (strain ATCC BAA-535 / M).